Consider the following 596-residue polypeptide: Zinc finger E-box-binding homeobox protein zag-1 (596 aa).

The C2H2-type 1 zinc-finger motif lies at 24 to 46 (FKCPECTKAFKFKHHLKEHIRIH). The C2H2-type 2; degenerate zinc-finger motif lies at 52 to 72 (FECQQCHKRFSHSGSYSSHMS). Residues 133–145 (LENGTSPTPTQEP) show a composition bias toward polar residues. 3 disordered regions span residues 133 to 225 (LENG…RPLR), 324 to 369 (NNSL…EPEW), and 395 to 421 (GFVTNQEDEEEKPIKAEESPVSSGSSS). The span at 165-179 (SEVKTEVKTEVKTED) shows a compositional bias: basic and acidic residues. Residues 188–200 (PAVSMSLSPAPEQ) show a composition bias toward polar residues. The segment covering 201–216 (NGNESMNNGGSGSDGK) has biased composition (low complexity). The homeobox DNA-binding region spans 223–282 (PLRSRSFLNDSQVAVLQNHFKRNPFPSKYELSAVAEQIGVNKRVVQVWFQNTRAKERRSN). Residues 331–355 (QDERNNENTDEVMDHDGLKDGKETP) are compositionally biased toward basic and acidic residues. C2H2-type zinc fingers lie at residues 481–503 (FSCDQCDKVFGKQSSLARHKYEH) and 509–531 (YKCDICEKAFKHKHHLTEHKRLH). Residues 537 to 560 (FQCDKCLKRFSHSGSYSQHMNHRY) form a C2H2-type 5; degenerate zinc finger. Residues 569-596 (QPASPSDVLNGGSVTVSPSSSNTPPPST) form a disordered region. The segment covering 578 to 590 (NGGSVTVSPSSSN) has biased composition (low complexity).

Expressed in the six touch receptor neurons (TRNs) but not in the FLP and PVD neurons. Expressed in the M4 cholinergic motor neuron.

It localises to the nucleus. Its function is as follows. Transcription factor. Down-regulates expression of genes involved in either the synthesis or reuptake of serotonin, dopamine and GABA. Acts as a transcriptional repressor to regulate multiple, discrete, neuron-specific aspects of terminal differentiation, including cell migration, axonal development and gene expression. Promotes touch receptor neuron differentiation by repressing the expression of egl-44 and egl-46. As egl-44 and egl-46, probably acting as a heterodimer, repress expression of zag-1 in FLP neurons, together these proteins form a bistable, negative-feedback loop that regulates the choice between neuronal fates. Required for axon guidance. Involved in the proper development of the pharynx. Required for pharynx isthmus peristalsis, probably via a role in the differentiation of the M4 cholinergic motor neuron. Directly represses its own transcription by interacting with conserved E-box sequence motifs 5'-CACCTG-3' in its own promoter. May also act as a transcriptional activator of the homeodomain ceh-28. The protein is Zinc finger E-box-binding homeobox protein zag-1 of Caenorhabditis elegans.